Consider the following 179-residue polypeptide: Shikimate kinase (179 aa).

11–16 (GAGKTT) contacts ATP. Mg(2+) is bound at residue T15. 3 residues coordinate substrate: D33, R57, and G79. Residue R118 coordinates ATP. R140 provides a ligand contact to substrate.

It belongs to the shikimate kinase family. In terms of assembly, monomer. Mg(2+) is required as a cofactor.

It is found in the cytoplasm. It catalyses the reaction shikimate + ATP = 3-phosphoshikimate + ADP + H(+). It participates in metabolic intermediate biosynthesis; chorismate biosynthesis; chorismate from D-erythrose 4-phosphate and phosphoenolpyruvate: step 5/7. Its function is as follows. Catalyzes the specific phosphorylation of the 3-hydroxyl group of shikimic acid using ATP as a cosubstrate. The protein is Shikimate kinase of Bacteroides fragilis (strain ATCC 25285 / DSM 2151 / CCUG 4856 / JCM 11019 / LMG 10263 / NCTC 9343 / Onslow / VPI 2553 / EN-2).